A 222-amino-acid chain; its full sequence is Superoxide dismutase [Mn], mitochondrial (222 aa).

The N-terminal 24 residues, 1 to 24 (MLSRAACSTSRRLVPALSVLGSRQ), are a transit peptide targeting the mitochondrion. H50 contacts Mn(2+). Y58 carries the 3'-nitrotyrosine modification. An N6-acetyllysine; alternate mark is found at K68 and K75. An N6-succinyllysine; alternate mark is found at K68 and K75. Residue H98 participates in Mn(2+) binding. N6-acetyllysine; alternate occurs at positions 122 and 130. N6-succinyllysine; alternate occurs at positions 122 and 130. Residues D183 and H187 each coordinate Mn(2+). At K202 the chain carries N6-acetyllysine.

The protein belongs to the iron/manganese superoxide dismutase family. As to quaternary structure, homotetramer. Requires Mn(2+) as cofactor. In terms of processing, nitrated under oxidative stress. Nitration coupled with oxidation inhibits the catalytic activity. Acetylation at Lys-122 decreases enzymatic activity. Deacetylated by SIRT3 upon exposure to ionizing radiations or after long fasting. Post-translationally, polyubiquitinated; leading to proteasomal degradation. Deubiquitinated by USP36 which increases protein stability.

Its subcellular location is the mitochondrion matrix. The enzyme catalyses 2 superoxide + 2 H(+) = H2O2 + O2. In terms of biological role, destroys superoxide anion radicals which are normally produced within the cells and which are toxic to biological systems. The chain is Superoxide dismutase [Mn], mitochondrial (SOD2) from Bos taurus (Bovine).